The sequence spans 495 residues: UDP-N-acetylmuramoyl-L-alanyl-D-glutamate--2,6-diaminopimelate ligase (495 aa).

UDP-N-acetyl-alpha-D-muramoyl-L-alanyl-D-glutamate is bound by residues Leu-27, Ser-29, and 44-46 (HQA). Residue 116 to 122 (GTNGKTT) coordinates ATP. UDP-N-acetyl-alpha-D-muramoyl-L-alanyl-D-glutamate is bound by residues Asn-157, 158-159 (TT), Ser-185, Gln-191, and Arg-193. Lys-225 is modified (N6-carboxylysine). Meso-2,6-diaminopimelate-binding positions include Arg-390, 414–417 (DNPR), Gly-465, and Glu-469. The Meso-diaminopimelate recognition motif signature appears at 414-417 (DNPR).

The protein belongs to the MurCDEF family. MurE subfamily. The cofactor is Mg(2+). Post-translationally, carboxylation is probably crucial for Mg(2+) binding and, consequently, for the gamma-phosphate positioning of ATP.

The protein localises to the cytoplasm. It catalyses the reaction UDP-N-acetyl-alpha-D-muramoyl-L-alanyl-D-glutamate + meso-2,6-diaminopimelate + ATP = UDP-N-acetyl-alpha-D-muramoyl-L-alanyl-gamma-D-glutamyl-meso-2,6-diaminopimelate + ADP + phosphate + H(+). Its pathway is cell wall biogenesis; peptidoglycan biosynthesis. Its function is as follows. Catalyzes the addition of meso-diaminopimelic acid to the nucleotide precursor UDP-N-acetylmuramoyl-L-alanyl-D-glutamate (UMAG) in the biosynthesis of bacterial cell-wall peptidoglycan. This chain is UDP-N-acetylmuramoyl-L-alanyl-D-glutamate--2,6-diaminopimelate ligase, found in Enterobacter sp. (strain 638).